The chain runs to 158 residues: Small ribosomal subunit protein uS7 (158 aa).

Belongs to the universal ribosomal protein uS7 family. Part of the 30S ribosomal subunit. Contacts proteins S9 and S11.

Its function is as follows. One of the primary rRNA binding proteins, it binds directly to 16S rRNA where it nucleates assembly of the head domain of the 30S subunit. Is located at the subunit interface close to the decoding center, probably blocks exit of the E-site tRNA. This chain is Small ribosomal subunit protein uS7, found in Gluconacetobacter diazotrophicus (strain ATCC 49037 / DSM 5601 / CCUG 37298 / CIP 103539 / LMG 7603 / PAl5).